The following is a 587-amino-acid chain: Calcium/calmodulin-dependent protein kinase kinase 2 (587 aa).

Residues 1–11 (MSSCVSSQPTS) are compositionally biased toward polar residues. Disordered regions lie at residues 1–32 (MSSCVSSQPTSDRAAPQDELGSGGVSRESQKP) and 74–115 (EADG…SSLD). N-acetylserine is present on S2. A phosphoserine mark is found at S99, S113, S128, S132, and S136. Positions 101–115 (QERSQGGPASSSSLD) are enriched in polar residues. The 282-residue stretch at 164-445 (YTLKDEIGKG…VPEIKLHPWV (282 aa)) folds into the Protein kinase domain. ATP is bound by residues 170 to 178 (IGKGSYGVV) and K193. The tract at residues 203–225 (QAGFPRRPPPRGTRPAPGGCIQP) is RP domain. A disordered region spans residues 204–224 (AGFPRRPPPRGTRPAPGGCIQ). D311 serves as the catalytic Proton acceptor. The segment at 471 to 476 (ENSVKH) is autoinhibitory domain. The calmodulin-binding stretch occupies residues 474–499 (VKHIPSLATVILVKTMIRKRSFGNPF). Phosphoserine occurs at positions 494 and 510. The tract at residues 496 to 587 (GNPFEGSRRE…QQPEEAMEPE (92 aa)) is disordered. The span at 520–535 (PTREWEPLSEPKEARQ) shows a compositional bias: basic and acidic residues. Residues 569-579 (PGSPPRTPPQQ) are compositionally biased toward pro residues. S571 is modified (phosphoserine).

The protein belongs to the protein kinase superfamily. Ser/Thr protein kinase family. Interacts with calmodulin. Phosphorylated by PKA. Each isoform may show a different pattern of phosphorylation. Autophosphorylated. Mainly expressed in brain, but detected in all tissues tested (at protein level). In the brain, isoform 1 may be predominant. with high levels in the cerebellum and hippocampus, although isoform 3 is detectable. Isoform 3 is also expressed in lung.

It localises to the nucleus. The protein resides in the cytoplasm. It is found in the cell projection. The protein localises to the neuron projection. It carries out the reaction L-seryl-[protein] + ATP = O-phospho-L-seryl-[protein] + ADP + H(+). The catalysed reaction is L-threonyl-[protein] + ATP = O-phospho-L-threonyl-[protein] + ADP + H(+). Its activity is regulated as follows. Activated by Ca(2+)/calmodulin. Binding of calmodulin may relieve intrasteric autoinhibition. Autophosphorylation does not alter activity or regulation by Ca(2+)/calmodulin. In part, activity is independent on Ca(2+)/calmodulin. Functionally, calcium/calmodulin-dependent protein kinase belonging to a proposed calcium-triggered signaling cascade involved in a number of cellular processes. Phosphorylates CAMK1 and CAMK4. Phosphorylates CAMK1D. Seems to be involved in hippocampal activation of CREB1. Efficiently phosphorylates 5'-AMP-activated protein kinase (AMPK) trimer, including that consisting of PRKAA1, PRKAB1 and PRKAG1. This phosphorylation is stimulated in response to Ca(2+) signals. May play a role in neurite growth. Isoform 2 may promote neurite elongation, while isoform 1 may promoter neurite branching. This chain is Calcium/calmodulin-dependent protein kinase kinase 2 (Camkk2), found in Rattus norvegicus (Rat).